The primary structure comprises 381 residues: 3-dehydroquinate synthase (381 aa).

NAD(+)-binding positions include 81–86 (EGESSK), 115–119 (GVIGD), 139–140 (TS), K152, and K161. Zn(2+) is bound by residues E194, H256, and H274.

It belongs to the sugar phosphate cyclases superfamily. Dehydroquinate synthase family. Requires Co(2+) as cofactor. It depends on Zn(2+) as a cofactor. NAD(+) is required as a cofactor.

The protein resides in the cytoplasm. It carries out the reaction 7-phospho-2-dehydro-3-deoxy-D-arabino-heptonate = 3-dehydroquinate + phosphate. Its pathway is metabolic intermediate biosynthesis; chorismate biosynthesis; chorismate from D-erythrose 4-phosphate and phosphoenolpyruvate: step 2/7. Its function is as follows. Catalyzes the conversion of 3-deoxy-D-arabino-heptulosonate 7-phosphate (DAHP) to dehydroquinate (DHQ). This chain is 3-dehydroquinate synthase, found in Rhodopseudomonas palustris (strain ATCC BAA-98 / CGA009).